Consider the following 213-residue polypeptide: GTP cyclohydrolase 1 (213 aa).

3 residues coordinate Zn(2+): cysteine 104, histidine 107, and cysteine 175.

Belongs to the GTP cyclohydrolase I family. As to quaternary structure, toroid-shaped homodecamer, composed of two pentamers of five dimers.

It catalyses the reaction GTP + H2O = 7,8-dihydroneopterin 3'-triphosphate + formate + H(+). Its pathway is cofactor biosynthesis; 7,8-dihydroneopterin triphosphate biosynthesis; 7,8-dihydroneopterin triphosphate from GTP: step 1/1. This Brucella abortus (strain 2308) protein is GTP cyclohydrolase 1.